A 461-amino-acid polypeptide reads, in one-letter code: Homocitrate synthase (461 aa).

Residues 4-259 form the Pyruvate carboxyltransferase domain; sequence VGILDSTLRE…IEVVKLDKLQ (256 aa). R12 is a binding site for 2-oxoglutarate. A Mg(2+)-binding site is contributed by E13. The 2-oxoglutarate site is built by H76, R136, and T170. 2 residues coordinate Mg(2+): H198 and H200. The active-site Proton acceptor is the H292.

This sequence belongs to the alpha-IPM synthase/homocitrate synthase family. Homocitrate synthase LYS20/LYS21 subfamily. The cofactor is Mg(2+). Requires Mn(2+) as cofactor.

It carries out the reaction acetyl-CoA + 2-oxoglutarate + H2O = (2R)-homocitrate + CoA + H(+). It participates in amino-acid biosynthesis; L-lysine biosynthesis via AAA pathway; L-alpha-aminoadipate from 2-oxoglutarate: step 1/5. Catalyzes the aldol-type condensation of 2-oxoglutarate with acetyl-CoA to yield homocitrate. Carries out the first step of the alpha-aminoadipate (AAA) lysine biosynthesis pathway. This is Homocitrate synthase from Saccharolobus solfataricus (strain ATCC 35092 / DSM 1617 / JCM 11322 / P2) (Sulfolobus solfataricus).